A 1034-amino-acid polypeptide reads, in one-letter code: Potassium-transporting ATPase alpha chain 1 (1034 aa).

Residues Gly-2–Pro-97 lie on the Cytoplasmic side of the membrane. Phosphotyrosine is present on residues Tyr-7 and Tyr-10. The tract at residues Glu-13–Glu-40 is disordered. A compositionally biased stretch (basic residues) spans Met-26–Lys-39. Ser-27 carries the post-translational modification Phosphoserine; by PKA and PKC. Residues Glu-98–Ala-118 traverse the membrane as a helical segment. Residues Ala-119–Tyr-141 lie on the Lumenal side of the membrane. Residues Leu-142 to Phe-162 traverse the membrane as a helical segment. Residues Lys-163 to Ile-298 are Cytoplasmic-facing. The disordered stretch occupies residues Lys-222–Glu-244. Residues Asn-225–Pro-239 are compositionally biased toward polar residues. A helical membrane pass occupies residues Glu-299–Ile-318. Residues Val-319 to Ala-330 are Lumenal-facing. Residues Met-331–Ala-348 form a helical membrane-spanning segment. Residues Val-339, Ala-340, Val-342, and Glu-344 each coordinate K(+). The Cytoplasmic segment spans residues Thr-349–Leu-782. The 4-aspartylphosphate intermediate role is filled by Asp-386. Mg(2+) contacts are provided by Asp-386 and Thr-388. Ser-462 and Ser-600 each carry phosphoserine. Mg(2+) is bound by residues Asp-727 and Asp-731. The helical transmembrane segment at Lys-783 to Ile-802 threads the bilayer. K(+) is bound at residue Glu-796. Topologically, residues Tyr-803 to Leu-812 are lumenal. Residues Gly-813–Ala-833 traverse the membrane as a helical segment. Glu-821 is a binding site for K(+). Over Tyr-834–Arg-853 the chain is Cytoplasmic. Ser-839 carries the post-translational modification Phosphoserine. The helical transmembrane segment at Leu-854–Phe-876 threads the bilayer. Over Thr-877–Cys-928 the chain is Lumenal. The helical transmembrane segment at Tyr-929–Lys-948 threads the bilayer. The Cytoplasmic segment spans residues Thr-949 to Asn-962. Ser-953 is subject to Phosphoserine; by PKA. A helical membrane pass occupies residues Arg-963–Tyr-981. Residues Cys-982–Phe-996 are Lumenal-facing. Residues Gln-997 to Lys-1017 form a helical membrane-spanning segment. The Cytoplasmic segment spans residues Leu-1018 to Tyr-1034.

This sequence belongs to the cation transport ATPase (P-type) (TC 3.A.3) family. Type IIC subfamily. In terms of assembly, the gastric H(+)/K(+) ATPase pump is composed of the catalytic alpha subunit ATP4A and the regulatory beta subunit ATP4B. Interacts (via the P-domain) with ATP4B (via N-terminus); this interaction stabilizes the lumenal-open E2 conformation state and prevents the reverse reaction of the transport cycle.

The protein resides in the apical cell membrane. It localises to the cell membrane. It catalyses the reaction K(+)(out) + ATP + H2O + H(+)(in) = K(+)(in) + ADP + phosphate + 2 H(+)(out). Its activity is regulated as follows. Down-regulated by K(+)-competitive acid blockers (P-CABs) such as vonoprazan. In terms of biological role, the catalytic subunit of the gastric H(+)/K(+) ATPase pump which transports H(+) ions in exchange for K(+) ions across the apical membrane of parietal cells. Uses ATP as an energy source to pump H(+) ions to the gastric lumen while transporting K(+) ion from the lumen into the cell. Remarkably generates a million-fold proton gradient across the gastric parietal cell membrane, acidifying the gastric juice down to pH 1. Within a transport cycle, the transfer of a H(+) ion across the membrane is coupled to ATP hydrolysis and is associated with a transient phosphorylation that shifts the pump conformation from inward-facing (E1) to outward-facing state (E2). The release of the H(+) ion in the stomach lumen is followed by binding of K(+) ion converting the pump conformation back to the E1 state. The protein is Potassium-transporting ATPase alpha chain 1 (ATP4A) of Sus scrofa (Pig).